The chain runs to 546 residues: DDB1- and CUL4-associated factor 11 (546 aa).

Polar residues predominate over residues 1 to 10 (MGSRNSSSAG). Positions 1–40 (MGSRNSSSAGTGSGDPSEGLPRRGAGLRRSEEEEEEDEDV) are disordered. Phosphoserine is present on residues Ser73 and Ser75. The segment at 79–100 (HDSAWDGRLGDRYNPPVDATPD) is disordered. A compositionally biased stretch (basic and acidic residues) spans 80–89 (DSAWDGRLGD). WD repeat units follow at residues 170-210 (TYSQ…RKFK), 216-258 (DVGW…TALD), 263-302 (ERRFAVFSIAVSSDGREVLGGANDGCLYVFDREQNRRTLQ), 305-345 (SHED…EDDP), 353-392 (GHQDGITFIDSKGDARYLISNSKDQTIKLWDIRRFSSREG), 435-480 (GVLH…KKLT), and 481-520 (THKACVRDVSWHPFEEKIVSSSWDGNLRLWQYRQAEYFQD). The tract at residues 521 to 546 (DMPESEEHPSTPAPMSHPSTAFSSPQ) is disordered. The segment covering 537 to 546 (HPSTAFSSPQ) has biased composition (polar residues).

Interacts with DDB1 and CUL4A.

Its pathway is protein modification; protein ubiquitination. May function as a substrate receptor for CUL4-DDB1 E3 ubiquitin-protein ligase complex. This chain is DDB1- and CUL4-associated factor 11 (DCAF11), found in Bos taurus (Bovine).